Reading from the N-terminus, the 166-residue chain is Flagellar protein LafL (166 aa).

Residues 6-26 (MIAMFIAMIITSALVSAATIM) form a helical membrane-spanning segment.

Belongs to the FliL family.

The protein resides in the cell inner membrane. Its function is as follows. Controls the rotational direction of flagella during chemotaxis. This is Flagellar protein LafL (lafL) from Vibrio parahaemolyticus serotype O3:K6 (strain RIMD 2210633).